We begin with the raw amino-acid sequence, 320 residues long: Acetyl-coenzyme A carboxylase carboxyl transferase subunit beta (320 aa).

Positions 25 to 294 (LWRKCPECGT…AIVGDLPAPD (270 aa)) constitute a CoA carboxyltransferase N-terminal domain. Zn(2+)-binding residues include Cys-29, Cys-32, Cys-48, and Cys-51. Residues 29–51 (CPECGTMLFHRELSDNLFVCISC) form a C4-type zinc finger. A disordered region spans residues 290–320 (LPAPDPAPATPEPQKAAPSAPAQDKPGAGRS).

The protein belongs to the AccD/PCCB family. In terms of assembly, acetyl-CoA carboxylase is a heterohexamer composed of biotin carboxyl carrier protein (AccB), biotin carboxylase (AccC) and two subunits each of ACCase subunit alpha (AccA) and ACCase subunit beta (AccD). The cofactor is Zn(2+).

The protein localises to the cytoplasm. The catalysed reaction is N(6)-carboxybiotinyl-L-lysyl-[protein] + acetyl-CoA = N(6)-biotinyl-L-lysyl-[protein] + malonyl-CoA. It functions in the pathway lipid metabolism; malonyl-CoA biosynthesis; malonyl-CoA from acetyl-CoA: step 1/1. Its function is as follows. Component of the acetyl coenzyme A carboxylase (ACC) complex. Biotin carboxylase (BC) catalyzes the carboxylation of biotin on its carrier protein (BCCP) and then the CO(2) group is transferred by the transcarboxylase to acetyl-CoA to form malonyl-CoA. In Dinoroseobacter shibae (strain DSM 16493 / NCIMB 14021 / DFL 12), this protein is Acetyl-coenzyme A carboxylase carboxyl transferase subunit beta.